The primary structure comprises 231 residues: Cytochrome c oxidase assembly factor 7 (231 aa).

N-acetylalanine is present on Ala2. 5 Sel1-like repeats span residues 34 to 66 (PEGC…EKYG), 68 to 104 (GDSC…EKPG), 108 to 146 (VESC…DGGY), 147 to 183 (AASC…DLGH), and 184 to 219 (VWAC…QLHK).

The protein belongs to the hcp beta-lactamase family. As to quaternary structure, interacts with CHCHD4/MIA40 through transient intermolecular disulfide bonds.

It localises to the mitochondrion intermembrane space. Its function is as follows. Required for assembly of mitochondrial respiratory chain complex I and complex IV. This chain is Cytochrome c oxidase assembly factor 7 (Coa7), found in Mus musculus (Mouse).